We begin with the raw amino-acid sequence, 95 residues long: DNA-directed RNA polymerase subunit Rpo11 (95 aa).

It belongs to the archaeal Rpo11/eukaryotic RPB11/RPC19 RNA polymerase subunit family. As to quaternary structure, part of the RNA polymerase complex.

The protein resides in the cytoplasm. It carries out the reaction RNA(n) + a ribonucleoside 5'-triphosphate = RNA(n+1) + diphosphate. In terms of biological role, DNA-dependent RNA polymerase (RNAP) catalyzes the transcription of DNA into RNA using the four ribonucleoside triphosphates as substrates. This Thermococcus sibiricus (strain DSM 12597 / MM 739) protein is DNA-directed RNA polymerase subunit Rpo11.